Here is a 220-residue protein sequence, read N- to C-terminus: Protein-L-isoaspartate O-methyltransferase (220 aa).

The active site involves Ser-67.

Belongs to the methyltransferase superfamily. L-isoaspartyl/D-aspartyl protein methyltransferase family.

The protein localises to the cytoplasm. The catalysed reaction is [protein]-L-isoaspartate + S-adenosyl-L-methionine = [protein]-L-isoaspartate alpha-methyl ester + S-adenosyl-L-homocysteine. Catalyzes the methyl esterification of L-isoaspartyl residues in peptides and proteins that result from spontaneous decomposition of normal L-aspartyl and L-asparaginyl residues. It plays a role in the repair and/or degradation of damaged proteins. In Chlorobium phaeobacteroides (strain BS1), this protein is Protein-L-isoaspartate O-methyltransferase.